Reading from the N-terminus, the 161-residue chain is Crossover junction endodeoxyribonuclease RuvC (161 aa).

Catalysis depends on residues D7, E67, and D140. D7, E67, and D140 together coordinate Mg(2+).

The protein belongs to the RuvC family. Homodimer which binds Holliday junction (HJ) DNA. The HJ becomes 2-fold symmetrical on binding to RuvC with unstacked arms; it has a different conformation from HJ DNA in complex with RuvA. In the full resolvosome a probable DNA-RuvA(4)-RuvB(12)-RuvC(2) complex forms which resolves the HJ. The cofactor is Mg(2+).

The protein localises to the cytoplasm. It catalyses the reaction Endonucleolytic cleavage at a junction such as a reciprocal single-stranded crossover between two homologous DNA duplexes (Holliday junction).. In terms of biological role, the RuvA-RuvB-RuvC complex processes Holliday junction (HJ) DNA during genetic recombination and DNA repair. Endonuclease that resolves HJ intermediates. Cleaves cruciform DNA by making single-stranded nicks across the HJ at symmetrical positions within the homologous arms, yielding a 5'-phosphate and a 3'-hydroxyl group; requires a central core of homology in the junction. The consensus cleavage sequence is 5'-(A/T)TT(C/G)-3'. Cleavage occurs on the 3'-side of the TT dinucleotide at the point of strand exchange. HJ branch migration catalyzed by RuvA-RuvB allows RuvC to scan DNA until it finds its consensus sequence, where it cleaves and resolves the cruciform DNA. The protein is Crossover junction endodeoxyribonuclease RuvC of Natranaerobius thermophilus (strain ATCC BAA-1301 / DSM 18059 / JW/NM-WN-LF).